Here is a 446-residue protein sequence, read N- to C-terminus: C4-dicarboxylate transport protein (446 aa).

Helical transmembrane passes span His-20–Pro-40, Leu-56–Met-76, Ile-91–Val-111, Gly-160–Gly-180, Leu-200–Ile-220, Phe-233–Val-253, Ile-319–Gly-339, Leu-344–Ile-364, and Ala-367–Ile-387.

The protein belongs to the dicarboxylate/amino acid:cation symporter (DAACS) (TC 2.A.23) family.

Its subcellular location is the cell inner membrane. Its function is as follows. Responsible for the transport of dicarboxylates such as succinate, fumarate, and malate from the periplasm across the membrane. This Azorhizobium caulinodans (strain ATCC 43989 / DSM 5975 / JCM 20966 / LMG 6465 / NBRC 14845 / NCIMB 13405 / ORS 571) protein is C4-dicarboxylate transport protein.